Reading from the N-terminus, the 261-residue chain is Indole-3-glycerol phosphate synthase (261 aa).

Belongs to the TrpC family.

It carries out the reaction 1-(2-carboxyphenylamino)-1-deoxy-D-ribulose 5-phosphate + H(+) = (1S,2R)-1-C-(indol-3-yl)glycerol 3-phosphate + CO2 + H2O. It functions in the pathway amino-acid biosynthesis; L-tryptophan biosynthesis; L-tryptophan from chorismate: step 4/5. This is Indole-3-glycerol phosphate synthase from Paraburkholderia xenovorans (strain LB400).